Consider the following 327-residue polypeptide: Ribosomal RNA small subunit methyltransferase H (327 aa).

S-adenosyl-L-methionine contacts are provided by residues 42–44 (GGH), Asp61, Leu95, Asp109, and Gln116.

This sequence belongs to the methyltransferase superfamily. RsmH family.

The protein localises to the cytoplasm. It catalyses the reaction cytidine(1402) in 16S rRNA + S-adenosyl-L-methionine = N(4)-methylcytidine(1402) in 16S rRNA + S-adenosyl-L-homocysteine + H(+). In terms of biological role, specifically methylates the N4 position of cytidine in position 1402 (C1402) of 16S rRNA. The chain is Ribosomal RNA small subunit methyltransferase H from Desulfovibrio desulfuricans (strain ATCC 27774 / DSM 6949 / MB).